We begin with the raw amino-acid sequence, 5005 residues long: Bridge-like lipid transfer protein family member 1 (5005 aa).

Residues 27-47 (VVWLLVATILSCGWIIYLTYY) traverse the membrane as a helical segment. Disordered regions lie at residues 692–718 (RPAQKTSERVVSSPSMSPRPPVDPSEL) and 1205–1314 (KSVG…ASVC). Pro residues predominate over residues 708-718 (SPRPPVDPSEL). Positions 1205–1215 (KSVGIEGERKT) are enriched in basic and acidic residues. Residues 1226 to 1240 (SHSSSSSSEENSSSS) show a composition bias toward low complexity. Over residues 1248-1275 (GEKESPSSAADDHSVQKDLLHSARRDDG) the composition is skewed to basic and acidic residues. The segment covering 1278-1303 (SVPTEISGTSPVSPNTQDKSVGQSPL) has biased composition (polar residues). A phosphoserine mark is found at Ser1301, Ser1305, and Ser1323. Thr1325 carries the phosphothreonine modification. Disordered regions lie at residues 1343 to 1376 (SDVSRSDENVLDSPKQRRSFGSFPYTPSADSNSF), 1399 to 1425 (EEFEPISSDEGPGTYPGRKKKKKQMQQ), 1521 to 1544 (TNKRTSKSSLHRPLDLDTPTSEES), and 1676 to 1698 (FSENLSPKQDIRGTKTEHPMIGT). Phosphoserine occurs at positions 1355 and 1406. The segment covering 1521–1530 (TNKRTSKSSL) has biased composition (basic residues). Residues 1684 to 1693 (QDIRGTKTEH) show a composition bias toward basic and acidic residues. Phosphoserine is present on residues Ser1805 and Ser1808. 6 disordered regions span residues 1927–1991 (RGGV…PLMP), 2165–2192 (PAQPLKPPATVDQEHEEGLGLDNGGGLQ), 2265–2288 (TSGDTATDSPVHVGRAGMPVKESP), 2367–2387 (ESPVTKSGHNSLPTGVAPNLP), 2400–2420 (SSDQNTLDGTHSQHSTSQDDV), and 2598–2677 (TAGS…KDVV). Composition is skewed to polar residues over residues 1931–1948 (LTSNNSSDSPTGSGYNTD) and 1959–1971 (TSPSSDINGNSVS). Polar residues-rich tracts occupy residues 2367-2379 (ESPVTKSGHNSLP), 2400-2418 (SSDQNTLDGTHSQHSTSQD), and 2598-2608 (TAGSASPTPTF). Residues Ser2601 and Ser2603 each carry the phosphoserine modification. The span at 2619–2638 (SDFSRSSRGSLNGGNRVNNA) shows a compositional bias: low complexity. Over residues 2643 to 2665 (ANNENNKKESRNKNSLGRSERRT) the composition is skewed to basic and acidic residues. At Ser2755 the chain carries Phosphoserine. The segment at 2928–2967 (RQPSTAPQPMKEDIATPLPSEKTPTSVNQTPIETNEFPQL) is disordered. Residues 2949–2964 (KTPTSVNQTPIETNEF) show a composition bias toward polar residues. 3 positions are modified to phosphoserine: Ser3562, Glu3577, and Ser3653. Disordered regions lie at residues 3614 to 3662 (YSRS…TFNI), 3686 to 3744 (SSNS…ERFY), 3821 to 3843 (RRSYDRSSRSLDQDSPSKKKKFQ), 3935 to 3954 (KTNTLLPPQPPPIPSAKGKG), 4089 to 4145 (TTYP…SSSS), and 4325 to 4396 (QSAS…ASQQ). Positions 3686-3711 (SSNSEGSCSVFSSPKTTGGFSPSVPF) are enriched in polar residues. The span at 3727–3736 (EDSEKDEKDE) shows a compositional bias: acidic residues. A compositionally biased stretch (basic and acidic residues) spans 3821–3837 (RRSYDRSSRSLDQDSPS). Residues 4097–4112 (SPGSNAPQTGAKTSAS) show a composition bias toward polar residues. Positions 4117-4145 (PGSSGLGSPLGRSRHSSSQSDLTGSSSSS) are enriched in low complexity. Ser4124 carries the post-translational modification Phosphoserine. The span at 4325–4358 (QSASFTHMPQSPNVFNEHMTNNTMSPGTAAQSLK) shows a compositional bias: polar residues. A compositionally biased stretch (low complexity) spans 4359-4372 (SPASIRSRSVSDSS). A compositionally biased stretch (polar residues) spans 4381–4396 (KTSTPVNKSNKAASQQ).

Highly expressed in testis and ovary. Weakly or not expressed in other tissues.

It is found in the cell membrane. The protein localises to the endoplasmic reticulum membrane. It localises to the mitochondrion membrane. Tube-forming lipid transport protein which provides phosphatidylethanolamine for glycosylphosphatidylinositol (GPI) anchor synthesis in the endoplasmic reticulum. Plays a role in endosomal trafficking and endosome recycling. Also involved in the actin cytoskeleton and cilia structural dynamics. Acts as a regulator of phagocytosis. The chain is Bridge-like lipid transfer protein family member 1 (Bltp1) from Mus musculus (Mouse).